A 285-amino-acid chain; its full sequence is Cold sensitive U2 snRNA suppressor 2 (285 aa).

The RRM 1 domain occupies T45–F130. The span at G135–N149 shows a compositional bias: basic and acidic residues. Residues G135–P154 form a disordered region. Residue S163 is modified to Phosphoserine. The 83-residue stretch at R183–D265 folds into the RRM 2 domain. The segment at D265 to I285 is disordered. Over residues E276–I285 the composition is skewed to acidic residues.

It belongs to the HTATSF1 family. Interacts with PRP11. Associates with the U2 snRNA.

Its function is as follows. U2 snRNP protein which helps to refold U2 into a structure favorable for its binding to SF3b and SF3a prior to spliceosome assembly. Mediates functional interactions between U2 RNA and PRP5. Enforces ATP dependence during formation of the prespliceosome by brokering an interaction between PRP5 and the U2 snRNP that depends on correct U2 RNA structure. This is Cold sensitive U2 snRNA suppressor 2 (CUS2) from Saccharomyces cerevisiae (strain ATCC 204508 / S288c) (Baker's yeast).